A 346-amino-acid polypeptide reads, in one-letter code: Histidinol-phosphate aminotransferase (346 aa).

The residue at position 209 (lysine 209) is an N6-(pyridoxal phosphate)lysine.

It belongs to the class-II pyridoxal-phosphate-dependent aminotransferase family. Histidinol-phosphate aminotransferase subfamily. As to quaternary structure, homodimer. Pyridoxal 5'-phosphate is required as a cofactor.

The catalysed reaction is L-histidinol phosphate + 2-oxoglutarate = 3-(imidazol-4-yl)-2-oxopropyl phosphate + L-glutamate. Its pathway is amino-acid biosynthesis; L-histidine biosynthesis; L-histidine from 5-phospho-alpha-D-ribose 1-diphosphate: step 7/9. The polypeptide is Histidinol-phosphate aminotransferase (Vibrio cholerae serotype O1 (strain ATCC 39315 / El Tor Inaba N16961)).